The sequence spans 158 residues: F(420)H(2) dehydrogenase subunit C (158 aa).

Belongs to the complex I 30 kDa subunit family. The FPO complex is composed of at least 13 different subunits.

It localises to the cell membrane. It carries out the reaction methanophenazine + reduced coenzyme F420-(gamma-L-Glu)(n) = dihydromethanophenazine + oxidized coenzyme F420-(gamma-L-Glu)(n) + H(+). Functionally, component of the F(420)H(2) dehydrogenase (FPO complex) which is part of the energy-conserving F(420)H(2):heterodisulfide oxidoreductase system. The membrane-bound electron transfer system of the complex plays an important role in the metabolism of methylotrophic methanogens when the organisms grow on methanol or methylamines. Catalyzes the oxidation of methanophenazine to dihydromethanophenazine. It shuttles electrons from F(420)H(2), via FAD and iron-sulfur (Fe-S) centers, to methanophenazine (an electron carrier in the membrane). It couples the redox reaction to proton translocation (for every two electrons transferred, two hydrogen ions are translocated across the cytoplasmic membrane), and thus conserves the redox energy in a proton gradient. It also catalyzes the oxidation of F(420)H(2) with quinones such as 2,3-dimethyl-1,4-naphthoquinone, 2-methyl-1,4-naphthoquinone and tetramethyl-p-benzoquinone. The sequence is that of F(420)H(2) dehydrogenase subunit C (fpoC) from Methanosarcina mazei (strain ATCC BAA-159 / DSM 3647 / Goe1 / Go1 / JCM 11833 / OCM 88) (Methanosarcina frisia).